An 850-amino-acid polypeptide reads, in one-letter code: Protein SEY1 (850 aa).

A disordered region spans residues 1 to 27 (MSDLPPPDLGSEEISVSPTSSSSSFVP). Residues 1-741 (MSDLPPPDLG…KRALIQHVTH (741 aa)) are Cytoplasmic-facing. Low complexity predominate over residues 12–27 (EEISVSPTSSSSSFVP). Positions 64-297 (NNNYHIVSVF…NEDFLFKKYY (234 aa)) constitute a GB1/RHD3-type G domain. Residue 74 to 81 (GSQSTGKS) participates in GTP binding. Residues 742–762 (IPYYIYIVILVLGWNEFMAVL) traverse the membrane as a helical segment. Over 763–765 (RNP) the chain is Lumenal. The helical transmembrane segment at 766-786 (FFFTLLLMLGAGTYVLYHLNL) threads the bilayer. The Cytoplasmic segment spans residues 787 to 850 (LKPAMVVVQR…SDLTPPGEGS (64 aa)). The tract at residues 816–850 (QPQEHAKRLSKMAGITEDKPEEIEMSDLTPPGEGS) is disordered.

It belongs to the TRAFAC class dynamin-like GTPase superfamily. GB1/RHD3 GTPase family. RHD3 subfamily.

It is found in the endoplasmic reticulum membrane. Functionally, cooperates with the reticulon proteins and tubule-shaping DP1 family proteins to generate and maintain the structure of the tubular endoplasmic reticulum network. Has GTPase activity, which is required for its function in ER organization. The polypeptide is Protein SEY1 (Meyerozyma guilliermondii (strain ATCC 6260 / CBS 566 / DSM 6381 / JCM 1539 / NBRC 10279 / NRRL Y-324) (Yeast)).